The chain runs to 314 residues: Homoserine kinase (314 aa).

An ATP-binding site is contributed by 95–105; sequence PHSRGLGSSAA.

This sequence belongs to the GHMP kinase family. Homoserine kinase subfamily.

Its subcellular location is the cytoplasm. It catalyses the reaction L-homoserine + ATP = O-phospho-L-homoserine + ADP + H(+). The protein operates within amino-acid biosynthesis; L-threonine biosynthesis; L-threonine from L-aspartate: step 4/5. Catalyzes the ATP-dependent phosphorylation of L-homoserine to L-homoserine phosphate. The protein is Homoserine kinase of Mycobacterium sp. (strain KMS).